An 815-amino-acid chain; its full sequence is Plakophilin-2 (815 aa).

Basic and acidic residues predominate over residues 1 to 12 (MLKPHPEHKEQP). Disordered regions lie at residues 1–31 (MLKP…MAEE) and 76–105 (QLTL…ISSS). The span at 13 to 25 (QDSFTPSGDSTPD) shows a compositional bias: polar residues. The span at 91–105 (SSLAESQSSCQISSS) shows a compositional bias: low complexity. 9 ARM repeats span residues 317-357 (KGKP…NQCF), 360-399 (PDAK…NIVF), 402-442 (NENK…NLSS), 457-498 (PLTD…NLSS), 501-547 (PDGR…NLSY), 604-644 (PHGV…NLTA), 652-691 (AIAH…NISR), 693-737 (RELH…NLSQ), and 740-783 (ASNT…TLWR).

The protein belongs to the beta-catenin family.

It localises to the nucleus. Its subcellular location is the cell junction. The protein resides in the desmosome. The protein localises to the cytoplasm. In terms of biological role, required for development of the heart, potentially via cell-cell adhesion and modulation of expression of cardiac precursor genes. Plays a role in desmosome cell-cell junctions and their intracellular connectivity. This chain is Plakophilin-2, found in Danio rerio (Zebrafish).